Reading from the N-terminus, the 545-residue chain is 2-succinyl-5-enolpyruvyl-6-hydroxy-3-cyclohexene-1-carboxylate synthase (545 aa).

The protein belongs to the TPP enzyme family. MenD subfamily. As to quaternary structure, homodimer. The cofactor is Mg(2+). It depends on Mn(2+) as a cofactor. Requires thiamine diphosphate as cofactor.

It carries out the reaction isochorismate + 2-oxoglutarate + H(+) = 5-enolpyruvoyl-6-hydroxy-2-succinyl-cyclohex-3-ene-1-carboxylate + CO2. The protein operates within quinol/quinone metabolism; 1,4-dihydroxy-2-naphthoate biosynthesis; 1,4-dihydroxy-2-naphthoate from chorismate: step 2/7. Its pathway is quinol/quinone metabolism; menaquinone biosynthesis. Catalyzes the thiamine diphosphate-dependent decarboxylation of 2-oxoglutarate and the subsequent addition of the resulting succinic semialdehyde-thiamine pyrophosphate anion to isochorismate to yield 2-succinyl-5-enolpyruvyl-6-hydroxy-3-cyclohexene-1-carboxylate (SEPHCHC). In Nocardia farcinica (strain IFM 10152), this protein is 2-succinyl-5-enolpyruvyl-6-hydroxy-3-cyclohexene-1-carboxylate synthase.